The sequence spans 386 residues: Galactokinase (386 aa).

35–38 is a substrate binding site; sequence EHTD. Residues Ser-69 and 125-131 contribute to the ATP site; that span reads GAGLSSS. Mg(2+) contacts are provided by Ser-131 and Glu-163. Asp-175 serves as the catalytic Proton acceptor. Tyr-224 lines the substrate pocket.

The protein belongs to the GHMP kinase family. GalK subfamily.

The protein resides in the cytoplasm. It catalyses the reaction alpha-D-galactose + ATP = alpha-D-galactose 1-phosphate + ADP + H(+). It functions in the pathway carbohydrate metabolism; galactose metabolism. Functionally, catalyzes the transfer of the gamma-phosphate of ATP to D-galactose to form alpha-D-galactose-1-phosphate (Gal-1-P). The sequence is that of Galactokinase from Vibrio vulnificus (strain CMCP6).